The primary structure comprises 559 residues: Tryprostatin B 6-hydroxylase (559 aa).

Helical transmembrane passes span 13-35 (PSVM…HLSY), 48-65 (YVRF…LLYA), and 82-104 (VSLL…RTLF). Cys502 provides a ligand contact to heme.

The protein belongs to the cytochrome P450 family. It depends on heme as a cofactor.

It localises to the membrane. It catalyses the reaction tryprostatin B + reduced [NADPH--hemoprotein reductase] + O2 = 6-hydroxytryprostatin B + oxidized [NADPH--hemoprotein reductase] + H2O + H(+). It participates in mycotoxin biosynthesis. In terms of biological role, cytochrome P450 monooxygenase; part of the gene cluster that mediates the biosynthesis of fumitremorgins, indole alkaloids that carry not only intriguing chemical structures, but also interesting biological and pharmacological activities. The biosynthesis of fumitremorgin-type alkaloids begins by condensation of the two amino acids L-tryptophan and L-proline to brevianamide F, catalyzed by the non-ribosomal peptide synthetase ftmA. Brevianamide F is then prenylated by the prenyltransferase ftmPT1/ftmB in the presence of dimethylallyl diphosphate, resulting in the formation of tryprostatin B. The three cytochrome P450 monooxygenases, ftmP450-1/ftmC, ftmP450-2/ftmE and ftmP450-3/FtmG, are responsible for the conversion of tryprostatin B to 6-hydroxytryprostatin B, tryprostatin A to fumitremorgin C and fumitremorgin C to 12,13-dihydroxyfumitremorgin C, respectively. The putative methyltransferase ftmMT/ftmD is expected for the conversion of 6-hydroxytryprostatin B to tryprostatin A. FtmPT2/FtmH catalyzes the prenylation of 12,13-dihydroxyfumitre-morgin C in the presence of dimethylallyl diphosphate, resulting in the formation of fumitremorgin B. Fumitremorgin B is further converted to verruculogen by ftmOx1/ftmF via the insertion of an endoperoxide bond between the two prenyl moieties. In some fungal species, verruculogen is further converted to fumitremorgin A, but the enzymes involved in this step have not been identified yet. The sequence is that of Tryprostatin B 6-hydroxylase from Aspergillus fumigatus (Neosartorya fumigata).